The following is a 528-amino-acid chain: GMP synthase [glutamine-hydrolyzing] (528 aa).

The Glutamine amidotransferase type-1 domain maps to 22–212 (AILVLDFGSQ…VFKICQSQTN (191 aa)). The active-site Nucleophile is the Cys-99. Catalysis depends on residues His-186 and Glu-188. In terms of domain architecture, GMPS ATP-PPase spans 213–403 (WSLESNVETI…LGIKKEALYR (191 aa)). ATP is bound at residue 240–246 (SGGTDSL).

Homodimer.

It carries out the reaction XMP + L-glutamine + ATP + H2O = GMP + L-glutamate + AMP + diphosphate + 2 H(+). It participates in purine metabolism; GMP biosynthesis; GMP from XMP (L-Gln route): step 1/1. Functionally, catalyzes the synthesis of GMP from XMP. In Borrelia garinii subsp. bavariensis (strain ATCC BAA-2496 / DSM 23469 / PBi) (Borreliella bavariensis), this protein is GMP synthase [glutamine-hydrolyzing].